The following is a 249-amino-acid chain: DNA polymerase sliding clamp (249 aa).

This sequence belongs to the PCNA family. As to quaternary structure, homotrimer. The subunits circularize to form a toroid; DNA passes through its center. Replication factor C (RFC) is required to load the toroid on the DNA.

Sliding clamp subunit that acts as a moving platform for DNA processing. Responsible for tethering the catalytic subunit of DNA polymerase and other proteins to DNA during high-speed replication. This is DNA polymerase sliding clamp from Thermococcus sibiricus (strain DSM 12597 / MM 739).